We begin with the raw amino-acid sequence, 600 residues long: CBP80/20-dependent translation initiation factor (600 aa).

Met1 is modified (N-acetylmethionine). Over residues 1–18 (MENSSAASASSEAGSSRS) the composition is skewed to low complexity. 4 disordered regions span residues 1–20 (MENSSAASASSEAGSSRSQE), 43–62 (DKTEGDGESQRTQSHISQWT), 134–154 (KQPLPHIDREGCGKGKLEDGD), and 175–370 (PHEA…SSPQ). The segment at 1–305 (MENSSAASAS…PPCSPDTLTP (305 aa)) is interaction with NCBP1/CBP80. Residue Ser18 is modified to Phosphoserine. Over residues 52-62 (QRTQSHISQWT) the composition is skewed to polar residues. Over residues 139–152 (HIDREGCGKGKLED) the composition is skewed to basic and acidic residues. Over residues 183-198 (TKKLFRRRRNDRRRQQ) the composition is skewed to basic residues. Basic and acidic residues predominate over residues 258–272 (PPGDKGEAGSHRNAK). Thr289 is subject to Phosphothreonine. Position 299 is a phosphoserine (Ser299). The segment covering 321 to 339 (AEIKHKDTVLPERLRERPK) has biased composition (basic and acidic residues). The region spanning 378–579 (MEILNIMRNN…LEVIELHANS (202 aa)) is the MIF4G domain.

The protein belongs to the CTIF family. In terms of assembly, interacts with NCBP1/CBP80; the interaction is direct. Associates with the eukaryotic translation initiation factor 3 (eIF-3) complex. In terms of tissue distribution, widely expressed.

It localises to the cytoplasm. The protein localises to the perinuclear region. Functionally, specifically required for the pioneer round of mRNA translation mediated by the cap-binding complex (CBC), that takes place during or right after mRNA export via the nuclear pore complex (NPC). Acts via its interaction with the NCBP1/CBP80 component of the CBC complex and recruits the 40S small subunit of the ribosome via eIF3. In contrast, it is not involved in steady state translation, that takes place when the CBC complex is replaced by cytoplasmic cap-binding protein eIF4E. Also required for nonsense-mediated mRNA decay (NMD), the pioneer round of mRNA translation mediated by the cap-binding complex playing a central role in nonsense-mediated mRNA decay (NMD). In Mus musculus (Mouse), this protein is CBP80/20-dependent translation initiation factor (Ctif).